A 78-amino-acid polypeptide reads, in one-letter code: uncharacterized protein (78 aa).

2 helical membrane-spanning segments follow: residues 25–45 and 50–70; these read IITA…DEVV and KCAD…FVFV.

The protein resides in the membrane. This is an uncharacterized protein from Saccharomyces cerevisiae (strain ATCC 204508 / S288c) (Baker's yeast).